A 957-amino-acid chain; its full sequence is ERC protein 2 (957 aa).

Positions 1–13 (MYGSARTITNLEG) are enriched in polar residues. The interval 1-44 (MYGSARTITNLEGSPSRSPRLPRSPRLGHRRTSSGGGGGTGKTL) is disordered. Positions 14 to 25 (SPSRSPRLPRSP) are enriched in low complexity. Ser65 and Ser666 each carry phosphoserine. The stretch at 140–917 (RQVRDSTMLD…RMKLMADNYD (778 aa)) forms a coiled coil. Positions 918–957 (DDHHHYHHHHHHHHHRSPGRSQHSNHRPSPDQDDEEGIWA) are disordered. The segment covering 922–943 (HYHHHHHHHHHRSPGRSQHSNH) has biased composition (basic residues). Over residues 948–957 (DQDDEEGIWA) the composition is skewed to acidic residues.

As to quaternary structure, interacts with BSN, ERC1, PPFIA1, PPFIA2, PPFIA3 and PPFIA4. Interacts through its C-terminus with the PDZ domain of RIMS1. Part of a complex consisting of ERC2, RIMS1 and UNC13A.

It localises to the cytoplasm. It is found in the synapse. The protein resides in the presynaptic active zone. The protein localises to the cytoskeleton. In terms of biological role, thought to be involved in the organization of the cytomatrix at the nerve terminals active zone (CAZ) which regulates neurotransmitter release. Seems to act together with BSN. May recruit liprin-alpha proteins to the CAZ. The chain is ERC protein 2 (ERC2) from Homo sapiens (Human).